The chain runs to 488 residues: Putative sugar transporter ERD6-like 13 (488 aa).

12 helical membrane-spanning segments follow: residues 51–71 (LILL…GTAA), 89–109 (LAEF…GAAM), 116–138 (VFGR…LMIA), 151–171 (LFLG…IVEI), 182–202 (AINS…GSVI), 207–227 (LALI…FIPE), 291–311 (VGIG…TFYL), 324–344 (VGVM…IVIV), 353–373 (LTVA…SFLF), 390–410 (GVLV…WVMI), 423–445 (GTLC…NFLF), and 451–471 (GVFF…MKMV).

The protein belongs to the major facilitator superfamily. Sugar transporter (TC 2.A.1.1) family.

The protein localises to the membrane. Functionally, sugar transporter. In Arabidopsis thaliana (Mouse-ear cress), this protein is Putative sugar transporter ERD6-like 13.